The sequence spans 47 residues: PhoP/PhoQ regulator MgrB (47 aa).

A helical membrane pass occupies residues 6–26; the sequence is WLVLIVVVLACLVLWAQVINI.

The protein belongs to the MgrB family. May form homooligomers. Probably interacts with the periplasmic domain of PhoQ.

It localises to the cell inner membrane. Its function is as follows. PhoP-regulated transcription is redox-sensitive, being activated when the periplasm becomes more reducing. MgrB acts between DsbA/DsbB and PhoP/PhoQ in this pathway. Represses PhoP/PhoQ signaling, possibly by binding to the periplasmic domain of PhoQ, altering its activity and that of downstream effector PhoP. This chain is PhoP/PhoQ regulator MgrB, found in Escherichia fergusonii (strain ATCC 35469 / DSM 13698 / CCUG 18766 / IAM 14443 / JCM 21226 / LMG 7866 / NBRC 102419 / NCTC 12128 / CDC 0568-73).